The following is a 273-amino-acid chain: Zinc finger protein AZF2 (273 aa).

The disordered stretch occupies residues 33 to 64 (LKRKRSKRQRSHSPSSSSSSPPRSRPKSQNQD). A compositionally biased stretch (basic residues) spans 34 to 43 (KRKRSKRQRS). The span at 44–54 (HSPSSSSSSPP) shows a compositional bias: low complexity. C2H2-type zinc fingers lie at residues 106-128 (YKCN…KASH) and 165-187 (HECS…KRCH). The tract at residues 195 to 215 (GGGGGSKSISHSGSVSSTVSE) is disordered. The segment covering 201–213 (KSISHSGSVSSTV) has biased composition (low complexity).

In terms of tissue distribution, expressed in roots, radicles, cotyledons, hypocotyls, leaf veins, stems, sepals, petals, stamens, placenta, funiculi and maturated seeds.

It is found in the nucleus. Its function is as follows. Transcriptional repressor involved in the inhibition of plant growth under abiotic stress conditions. Can repress the expression of various genes, including osmotic stress and abscisic acid-repressive genes and auxin-inducible genes, by binding to their promoter regions in a DNA sequence-specific manner. Acts as a negative regulator of abscisic acid (ABA) signaling during seed germination. Probably involved in jasmonate (JA) early signaling response. May regulate the expression of the JA biosynthesis gene LOX3 and control the expression of TIFY10A/JAZ1, a key repressor in the JA signaling cascade. May act as a positive regulator of leaf senescence. Has been identified as a suppressor of the deficiency of yeast snf4 mutant to grow on non-fermentable carbon source. The protein is Zinc finger protein AZF2 (AZF2) of Arabidopsis thaliana (Mouse-ear cress).